The chain runs to 390 residues: Oxygen-dependent coproporphyrinogen-III oxidase (390 aa).

An important for dimerization region spans residues 131 to 140 (VLQDGDVFEK). Ser181 contacts substrate. His195 serves as the catalytic Proton donor. Substrate-binding positions include 197 to 199 (NYR) and 348 to 353 (GARYES). An important for dimerization region spans residues 329–365 (YVEFNLIYDRGTKFGLYTPGARYESILMSLPLHARWE).

The protein belongs to the aerobic coproporphyrinogen-III oxidase family. As to quaternary structure, homodimer.

The catalysed reaction is coproporphyrinogen III + O2 + 2 H(+) = protoporphyrinogen IX + 2 CO2 + 2 H2O. The protein operates within porphyrin-containing compound metabolism; protoporphyrin-IX biosynthesis; protoporphyrinogen-IX from coproporphyrinogen-III (O2 route): step 1/1. Its function is as follows. Involved in the heme biosynthesis. Catalyzes the aerobic oxidative decarboxylation of propionate groups of rings A and B of coproporphyrinogen-III to yield the vinyl groups in protoporphyrinogen-IX. This Drosophila melanogaster (Fruit fly) protein is Oxygen-dependent coproporphyrinogen-III oxidase (Coprox).